We begin with the raw amino-acid sequence, 226 residues long: NAD(P)H-quinone oxidoreductase subunit K, chloroplastic (226 aa).

4 residues coordinate [4Fe-4S] cluster: Cys-43, Cys-44, Cys-108, and Cys-139.

The protein belongs to the complex I 20 kDa subunit family. As to quaternary structure, NDH is composed of at least 16 different subunits, 5 of which are encoded in the nucleus. The cofactor is [4Fe-4S] cluster.

Its subcellular location is the plastid. It localises to the chloroplast thylakoid membrane. The enzyme catalyses a plastoquinone + NADH + (n+1) H(+)(in) = a plastoquinol + NAD(+) + n H(+)(out). The catalysed reaction is a plastoquinone + NADPH + (n+1) H(+)(in) = a plastoquinol + NADP(+) + n H(+)(out). Functionally, NDH shuttles electrons from NAD(P)H:plastoquinone, via FMN and iron-sulfur (Fe-S) centers, to quinones in the photosynthetic chain and possibly in a chloroplast respiratory chain. The immediate electron acceptor for the enzyme in this species is believed to be plastoquinone. Couples the redox reaction to proton translocation, and thus conserves the redox energy in a proton gradient. In Lupinus luteus (European yellow lupine), this protein is NAD(P)H-quinone oxidoreductase subunit K, chloroplastic.